Consider the following 373-residue polypeptide: DNA dC-&gt;dU-editing enzyme APOBEC-3F (373 aa).

CMP/dCMP-type deaminase domains lie at 29–137 (RRNT…LCRL) and 174–321 (DDNY…LRSL). Residue lysine 52 forms a (Microbial infection) Glycyl lysine isopeptide (Lys-Gly) (interchain with G-Cter in ubiquitin) linkage. Positions 65, 96, and 99 each coordinate Zn(2+). Residue lysine 234 forms a (Microbial infection) Glycyl lysine isopeptide (Lys-Gly) (interchain with G-Cter in ubiquitin) linkage. Residue histidine 249 participates in Zn(2+) binding. The Proton donor role is filled by glutamate 251. Positions 280 and 283 each coordinate Zn(2+). Cysteine 280 and cysteine 283 form a disulfide bridge. Residues lysine 334, lysine 352, lysine 355, and lysine 358 each participate in a (Microbial infection) Glycyl lysine isopeptide (Lys-Gly) (interchain with G-Cter in ubiquitin) cross-link.

The protein belongs to the cytidine and deoxycytidylate deaminase family. In terms of assembly, homodimer. Interacts with APOBEC3G in an RNA-dependent manner. Interacts with AGO1, AGO2 and AGO3. As to quaternary structure, (Microbial infection) Interacts with HIV-1 Vif, leading to its ubiquitination and degradation by the proteasome. In the absence of Vif protein, specifically packaged into HIV-1 virions. Zn(2+) serves as cofactor. Post-translationally, (Microbial infection) Following infection by HIV-1, ubiquitinated by a cullin-5-RING E3 ubiquitin-protein ligase complex (ECS complex) hijacked by the HIV-1 Vif protein, leading to its degradation. Widely expressed. Highly expressed in ovary.

It localises to the cytoplasm. The protein localises to the P-body. The enzyme catalyses a 2'-deoxycytidine in single-stranded DNA + H2O + H(+) = a 2'-deoxyuridine in single-stranded DNA + NH4(+). (Microbial infection) Antiviral activity is neutralized by the HIV-1 virion infectivity factor (Vif), that prevents its incorporation into progeny virions by both inhibiting its translation and/or by inducing its ubiquitination and subsequent degradation by the 26S proteasome. Its function is as follows. DNA deaminase (cytidine deaminase) which acts as an inhibitor of retrovirus replication and retrotransposon mobility via deaminase-dependent and -independent mechanisms. Exhibits antiviral activity against viruse such as HIV-1 or HIV-2. After the penetration of retroviral nucleocapsids into target cells of infection and the initiation of reverse transcription, it can induce the conversion of cytosine to uracil in the minus-sense single-strand viral DNA, leading to G-to-A hypermutations in the subsequent plus-strand viral DNA. The resultant detrimental levels of mutations in the proviral genome, along with a deamination-independent mechanism that works prior to the proviral integration, together exert efficient antiretroviral effects in infected target cells. Selectively targets single-stranded DNA and does not deaminate double-stranded DNA or single- or double-stranded RNA. Exhibits antiviral activity also against hepatitis B virus (HBV), equine infectious anemia virus (EIAV), xenotropic MuLV-related virus (XMRV) and simian foamy virus (SFV) and may inhibit the mobility of LTR and non-LTR retrotransposons. May also play a role in the epigenetic regulation of gene expression through the process of active DNA demethylation. The sequence is that of DNA dC-&gt;dU-editing enzyme APOBEC-3F from Homo sapiens (Human).